A 2896-amino-acid chain; its full sequence is Protein PRRC2C (2896 aa).

N6-acetyllysine is present on lysine 27. A disordered region spans residues 28 to 212 (GKSLETQKTT…STAGTSEQND (185 aa)). Residues 88-97 (QEQHEEEKTP) show a composition bias toward basic and acidic residues. Over residues 105-119 (KPGVAAPPEVAPAPK) the composition is skewed to low complexity. Residues 134-144 (QVNSQFQQEFP) are compositionally biased toward polar residues. Over residues 151–160 (DQEKKEKETN) the composition is skewed to basic and acidic residues. Residues serine 187 and serine 191 each carry the phosphoserine modification. A compositionally biased stretch (polar residues) spans 201 to 211 (DESTAGTSEQN). Residue arginine 242 is modified to Asymmetric dimethylarginine; alternate. Omega-N-methylarginine; alternate is present on arginine 242. Asymmetric dimethylarginine is present on residues arginine 255 and arginine 266. Disordered stretches follow at residues 264-729 (PMRF…QHLA) and 750-788 (SGRPAMDIPPIHPGMIPPKPLMRRDQMEGSPNSSESFEH). Residues arginine 279 and arginine 281 each carry the omega-N-methylarginine modification. Over residues 301–310 (ELKELDKFDN) the composition is skewed to basic and acidic residues. Serine 335 is modified (phosphoserine). Over residues 341–358 (GSNSPKENNSEDQGSKAS) the composition is skewed to polar residues. A compositionally biased stretch (basic and acidic residues) spans 359–368 (ENNENKKETD). The span at 370–381 (VSNTKSSSQIPA) shows a compositional bias: polar residues. The residue at position 392 (lysine 392) is an N6-acetyllysine. A phosphoserine mark is found at serine 395 and serine 500. The segment covering 395-405 (SFNQERGTSSH) has biased composition (polar residues). Positions 465–648 (RREEEERRME…EATPVVHETE (184 aa)) are enriched in basic and acidic residues. A compositionally biased stretch (low complexity) spans 676 to 708 (QRQQEQMKQQQWQQQQQQGVLPQTVPSQPSSST). Residues 759–769 (PIHPGMIPPKP) are compositionally biased toward pro residues. A phosphoserine mark is found at serine 779, serine 785, and serine 801. Positions 804 to 1118 (RMLWGSDPYP…PVSTVQVEPA (315 aa)) are disordered. Composition is skewed to basic and acidic residues over residues 825 to 836 (ATEEPEDVRSEA), 852 to 867 (NQLEAHPKADFIRESS), and 878 to 888 (SVEDVRPHHTD). Phosphoserine occurs at positions 867, 878, 920, and 929. Composition is skewed to basic and acidic residues over residues 954–993 (IDSKEPIERPEEKPKKEGFIRSSEGPKPEKVYKSKSETRW), 1000–1010 (NRREEVNDRPV), and 1020–1058 (VLRDMKEEREQRKEKEGEKAEKVTEKVVVKPEKTEKKDL). The stretch at 1020-1046 (VLRDMKEEREQRKEKEGEKAEKVTEKV) forms a coiled coil. Residues 1059-1081 (PPPPPPPQPPAPIQPQSVPPPIQ) show a composition bias toward pro residues. The span at 1089-1100 (STETATLAQKPS) shows a compositional bias: polar residues. Lysine 1133 participates in a covalent cross-link: Glycyl lysine isopeptide (Lys-Gly) (interchain with G-Cter in SUMO2). Basic and acidic residues-rich tracts occupy residues 1143–1163 (SKDLVIERPRPDSRPAVKKES), 1170–1180 (YWKEARERDWF), 1214–1230 (HTRDYPQYRDNKPRAEH), and 1237–1248 (RQREESETRSES). Disordered stretches follow at residues 1143 to 1647 (SKDL…DALS), 1670 to 1785 (EDPQ…SAPV), 1905 to 1991 (APAS…TAEL), 2005 to 2164 (ISKK…VSEM), 2218 to 2238 (LPNTLPLPKRETIQQSSSLTS), 2257 to 2290 (WENSPNVREKGSPVTSTAPPIATGVSSSASGPST), 2317 to 2341 (GAGTYTTSSLSTKSTTTSDPPNICK), and 2668 to 2701 (DIKPGTPPIAGRSTTPTSSPFRATSTSPNSQSSK). Residues serine 1242, serine 1246, serine 1248, serine 1249, and serine 1263 each carry the phosphoserine modification. Composition is skewed to basic and acidic residues over residues 1261-1297 (RGSETDTDSEIHESASDKDSLSKGKLPKREERPENKK), 1305-1330 (FKPDNHVRIDNRLLEKPYVRDDDKAK), 1381-1418 (EVPKPEDGEPPRRHEQFIPIAADKRPPKFERKFDPARE), and 1429-1446 (PRQDKPPRFRRLREREAA). A phosphothreonine mark is found at threonine 1265 and threonine 1267. Composition is skewed to polar residues over residues 1457–1469 (TNGTVNNVAQEPV) and 1477–1491 (GNKTPDLSNQNSSDQ). Residues 1505–1517 (FNERRERDEKKNA) show a composition bias toward basic and acidic residues. Phosphoserine is present on serine 1544. 2 stretches are compositionally biased toward basic and acidic residues: residues 1620–1634 (NSKDSTGKKREDPKP) and 1692–1704 (RLQDEERRKKEEQ). Residues 1682–1717 (TEVVSKKQQKRLQDEERRKKEEQVIQVWNKKNANEK) adopt a coiled-coil conformation. Low complexity predominate over residues 1742–1785 (SSASVPPLASAPLPPSTSASVPASTSAPLPATLTPVPASTSAPV). A compositionally biased stretch (pro residues) spans 1913 to 1929 (APAPTPVSAPNPAPPAP). The segment covering 1943–1952 (PLQTTSQSSK) has biased composition (low complexity). The residue at position 1965 (threonine 1965) is a Phosphothreonine. Polar residues predominate over residues 1976-1986 (KSIQTPQSHGT). 2 positions are modified to phosphoserine: serine 1983 and serine 2013. The span at 2019 to 2035 (SVSAWNKPLTSFGSAPS) shows a compositional bias: polar residues. The segment covering 2075–2088 (KSADKIPEPKEQRQ) has biased composition (basic and acidic residues). Residue serine 2105 is modified to Phosphoserine. The segment covering 2108–2132 (ENKEHKPGPIGKERSLKNRKVKDAQ) has biased composition (basic and acidic residues). Position 2143 is a phosphoserine (serine 2143). Basic and acidic residues predominate over residues 2257 to 2267 (WENSPNVREKG). Serine 2260 carries the phosphoserine modification. The segment covering 2269 to 2290 (PVTSTAPPIATGVSSSASGPST) has biased composition (polar residues). The span at 2320–2334 (TYTTSSLSTKSTTTS) shows a compositional bias: low complexity. A phosphothreonine mark is found at threonine 2673 and threonine 2682. Over residues 2679–2701 (RSTTPTSSPFRATSTSPNSQSSK) the composition is skewed to polar residues. A phosphoserine mark is found at serine 2686 and serine 2694. Arginine 2814 is modified (omega-N-methylarginine). The residue at position 2823 (arginine 2823) is an Asymmetric dimethylarginine; alternate. Arginine 2823 carries the omega-N-methylarginine; alternate modification. Polar residues predominate over residues 2824–2833 (FFSEQQQSKQ). The segment at 2824 to 2896 (FFSEQQQSKQ…QAIKTEETKS (73 aa)) is disordered.

Overexpressed in bladder cancer.

It localises to the cytoplasm. The protein localises to the stress granule. In terms of biological role, required for efficient formation of stress granules. This chain is Protein PRRC2C, found in Homo sapiens (Human).